A 39-amino-acid chain; its full sequence is Photosystem II reaction center protein L (39 aa).

The chain crosses the membrane as a helical span at residues 18 to 38; that stretch reads SLYLGLLLVFVTGVLFSSYFF.

It belongs to the PsbL family. As to quaternary structure, PSII is composed of 1 copy each of membrane proteins PsbA, PsbB, PsbC, PsbD, PsbE, PsbF, PsbH, PsbI, PsbJ, PsbK, PsbL, PsbM, PsbT, PsbX, PsbY, PsbZ, Psb30/Ycf12, peripheral proteins PsbO, CyanoQ (PsbQ), PsbU, PsbV and a large number of cofactors. It forms dimeric complexes.

It is found in the cellular thylakoid membrane. Functionally, one of the components of the core complex of photosystem II (PSII). PSII is a light-driven water:plastoquinone oxidoreductase that uses light energy to abstract electrons from H(2)O, generating O(2) and a proton gradient subsequently used for ATP formation. It consists of a core antenna complex that captures photons, and an electron transfer chain that converts photonic excitation into a charge separation. This subunit is found at the monomer-monomer interface and is required for correct PSII assembly and/or dimerization. The chain is Photosystem II reaction center protein L from Synechococcus sp. (strain RCC307).